The following is a 201-amino-acid chain: Adenylyl-sulfate kinase (201 aa).

35–42 (GLSGSGKS) provides a ligand contact to ATP. Ser-109 functions as the Phosphoserine intermediate in the catalytic mechanism.

It belongs to the APS kinase family.

The catalysed reaction is adenosine 5'-phosphosulfate + ATP = 3'-phosphoadenylyl sulfate + ADP + H(+). Its pathway is sulfur metabolism; hydrogen sulfide biosynthesis; sulfite from sulfate: step 2/3. In terms of biological role, catalyzes the synthesis of activated sulfate. The sequence is that of Adenylyl-sulfate kinase from Escherichia coli O139:H28 (strain E24377A / ETEC).